We begin with the raw amino-acid sequence, 336 residues long: Ferrochelatase (336 aa).

The Fe cation site is built by His206 and Glu287.

The protein belongs to the ferrochelatase family.

It localises to the cytoplasm. The catalysed reaction is heme b + 2 H(+) = protoporphyrin IX + Fe(2+). Its pathway is porphyrin-containing compound metabolism; protoheme biosynthesis; protoheme from protoporphyrin-IX: step 1/1. In terms of biological role, catalyzes the ferrous insertion into protoporphyrin IX. In Neisseria meningitidis serogroup B (strain ATCC BAA-335 / MC58), this protein is Ferrochelatase.